Reading from the N-terminus, the 1718-residue chain is PR domain zinc finger protein 2 (1718 aa).

The region spanning 28–141 is the SET domain; sequence EEVRLFPSAV…PGEELLVWYN (114 aa). A disordered region spans residues 155–335; that stretch reads ERASARSKRS…TSEETLEDCS (181 aa). Positions 159 to 173 are enriched in basic residues; that stretch reads ARSKRSSPKSRKGKK. Polar residues predominate over residues 189–202; that stretch reads QLKTSEPDFTSANM. Basic and acidic residues predominate over residues 204–216; that stretch reads DSAEGPKEDEEKP. Over residues 265 to 297 the composition is skewed to acidic residues; sequence DLGEEEEEEEEEDEEEEEDDDDDELEDEGEEEA. A retinoblastoma protein binding region spans residues 294-316; the sequence is EEEASMPNENSVKEPEIRCDEKP. The span at 304–327 shows a compositional bias: basic and acidic residues; sequence SVKEPEIRCDEKPEDLLEEPKTTS. Residue Lys-347 forms a Glycyl lysine isopeptide (Lys-Gly) (interchain with G-Cter in SUMO2) linkage. 2 C2H2-type zinc fingers span residues 360-382 and 390-412; these read FPCQ…MHIH and FKCK…ERRH. The disordered stretch occupies residues 405 to 457; it reads RRRHERRHEAGLKRKPSQTLQPSEDLADGKASGENVASKDDSSPPSLGPDCLI. Ser-421 bears the Phosphoserine mark. The C2H2-type 3 zinc-finger motif lies at 483–506; the sequence is HPCKYCKKVFGTHTNMRRHQRRVH. Disordered stretches follow at residues 513-550 and 622-660; these read KGVR…EGEA and EDLP…DPMV. The residue at position 643 (Ser-643) is a Phosphoserine. Glycyl lysine isopeptide (Lys-Gly) (interchain with G-Cter in SUMO2) cross-links involve residues Lys-651, Lys-690, and Lys-692. Residues 729 to 797 are disordered; that stretch reads TSSRFKRRTS…GRDERETVSP (69 aa). Residues 738–748 are compositionally biased toward low complexity; sequence SSPPSSPQHSP. Ser-743 bears the Phosphoserine mark. Lys-774 is covalently cross-linked (Glycyl lysine isopeptide (Lys-Gly) (interchain with G-Cter in SUMO2)). Residues Ser-781, Ser-785, and Ser-796 each carry the phosphoserine modification. Residues Lys-866 and Lys-879 each participate in a glycyl lysine isopeptide (Lys-Gly) (interchain with G-Cter in SUMO2) cross-link. A disordered region spans residues 903 to 1083; that stretch reads VENPADGTRS…SPPPLSAISS (181 aa). Low complexity predominate over residues 951–969; sequence LQTPSLSSGQLPPLLIPTD. Short sequence motifs (SH3-binding) lie at residues 970 to 979 and 985 to 998; these read PSSPPPCPPV and PPPP…LPAP. The segment covering 970-997 has biased composition (pro residues); that stretch reads PSSPPPCPPVLTVATPPPPLLPTVPLPA. Residues 1018 to 1027 are compositionally biased toward low complexity; the sequence is SPLPILSPTV. The span at 1028-1038 shows a compositional bias: pro residues; that stretch reads SPSPSPIPPVE. An SH3-binding motif is present at residues 1028–1052; that stretch reads SPSPSPIPPVEPLMSAASPGPPTLS. Over residues 1042–1072 the composition is skewed to low complexity; that stretch reads SAASPGPPTLSSSSSSSSSSSSFSSSSSSSS. C2H2-type zinc fingers lie at residues 1134–1156, 1162–1185, and 1191–1214; these read FVCN…LSIH, FKCE…FLLH, and FVCS…RDLH. Residues Lys-1147 and Lys-1151 each participate in a glycyl lysine isopeptide (Lys-Gly) (interchain with G-Cter in SUMO2) cross-link. Residues 1244 to 1265 form a disordered region; it reads HMQSLPEDPLETSKEEEELNDS. Residues 1251–1265 show a composition bias toward acidic residues; it reads DPLETSKEEEELNDS. Residues Lys-1257 and Lys-1281 each participate in a glycyl lysine isopeptide (Lys-Gly) (interchain with G-Cter in SUMO2) cross-link. The C2H2-type 7; atypical zinc-finger motif lies at 1333–1355; that stretch reads IRCTKCGKGVDNMPELHKHILAC. The C2H2-type 8; atypical zinc-finger motif lies at 1455-1478; it reads HICPYCNREFTYIGSLNKHAAFSC. 3 disordered regions span residues 1478–1576, 1589–1612, and 1625–1652; these read CPKK…LRNS, GKKP…RSLH, and KSTL…VTRS. Over residues 1486–1498 the composition is skewed to basic residues; it reads PKKKVSHSSKKGG. The span at 1499–1511 shows a compositional bias: low complexity; sequence HSSPASSDKNSNS. 2 stretches are compositionally biased toward polar residues: residues 1525 to 1556 and 1599 to 1608; these read QSMQ…SKQN and HSAQLSSKTS. Positions 1635–1645 are enriched in basic and acidic residues; it reads DRFNIKSRERS.

This sequence belongs to the class V-like SAM-binding methyltransferase superfamily. As to quaternary structure, binds to the retinoblastoma protein (RB). Interacts with GATA3. Highly expressed in retinoblastoma cell lines and in brain tumors. Also expressed in a number of other cell lines and in brain, heart, skeletal muscle, liver and spleen. Isoform 1 is expressed in testis at much higher level than isoform 3.

The protein localises to the nucleus. It carries out the reaction L-lysyl(9)-[histone H3] + 3 S-adenosyl-L-methionine = N(6),N(6),N(6)-trimethyl-L-lysyl(9)-[histone H3] + 3 S-adenosyl-L-homocysteine + 3 H(+). Functionally, S-adenosyl-L-methionine-dependent histone methyltransferase that specifically methylates 'Lys-9' of histone H3. May function as a DNA-binding transcription factor. Binds to the macrophage-specific TPA-responsive element (MTE) of the HMOX1 (heme oxygenase 1) gene and may act as a transcriptional activator of this gene. In Homo sapiens (Human), this protein is PR domain zinc finger protein 2 (PRDM2).